Reading from the N-terminus, the 205-residue chain is Calcium-binding allergen Bet v 3 (205 aa).

The segment at 1–26 is disordered; sequence MPCSTEAMEKAGHGHASTPRKRSLSN. EF-hand domains lie at 36–71, 72–107, 130–165, and 168–203; these read LNTLRLRRIFDLFDKNSDGIITVDELSRALNLLGLE, TDLSELESTVKSFTREGNIGLQFEDFISLHQSLNDS, QEEADSFGGFKVFDEDGDGYISARELQMVLGKLGFS, and SEIDRVEKMIVSVDSNRDGRVDFFEFKDMMRSVLVR. The Ca(2+) site is built by Asp49, Asn51, Asp53, and Glu60. Residues Asp143, Asp145, Asp147, Tyr149, Glu154, Asp181, Asn183, Asp185, Arg187, and Glu192 each coordinate Ca(2+).

Functionally, could be involved in calcium metabolism in pollen. Binds 3 calcium ions. The polypeptide is Calcium-binding allergen Bet v 3 (BETVIII) (Betula pendula (European white birch)).